The chain runs to 232 residues: NAD(P)H-quinone oxidoreductase subunit K 1 (232 aa).

Cys49, Cys50, Cys114, and Cys145 together coordinate [4Fe-4S] cluster.

Belongs to the complex I 20 kDa subunit family. As to quaternary structure, NDH-1 can be composed of about 15 different subunits; different subcomplexes with different compositions have been identified which probably have different functions. [4Fe-4S] cluster is required as a cofactor.

It is found in the cellular thylakoid membrane. It carries out the reaction a plastoquinone + NADH + (n+1) H(+)(in) = a plastoquinol + NAD(+) + n H(+)(out). It catalyses the reaction a plastoquinone + NADPH + (n+1) H(+)(in) = a plastoquinol + NADP(+) + n H(+)(out). In terms of biological role, NDH-1 shuttles electrons from an unknown electron donor, via FMN and iron-sulfur (Fe-S) centers, to quinones in the respiratory and/or the photosynthetic chain. The immediate electron acceptor for the enzyme in this species is believed to be plastoquinone. Couples the redox reaction to proton translocation, and thus conserves the redox energy in a proton gradient. Cyanobacterial NDH-1 also plays a role in inorganic carbon-concentration. The polypeptide is NAD(P)H-quinone oxidoreductase subunit K 1 (Acaryochloris marina (strain MBIC 11017)).